A 251-amino-acid polypeptide reads, in one-letter code: Imidazole glycerol phosphate synthase subunit HisF (251 aa).

Catalysis depends on residues aspartate 11 and aspartate 130.

It belongs to the HisA/HisF family. As to quaternary structure, heterodimer of HisH and HisF.

The protein localises to the cytoplasm. It carries out the reaction 5-[(5-phospho-1-deoxy-D-ribulos-1-ylimino)methylamino]-1-(5-phospho-beta-D-ribosyl)imidazole-4-carboxamide + L-glutamine = D-erythro-1-(imidazol-4-yl)glycerol 3-phosphate + 5-amino-1-(5-phospho-beta-D-ribosyl)imidazole-4-carboxamide + L-glutamate + H(+). Its pathway is amino-acid biosynthesis; L-histidine biosynthesis; L-histidine from 5-phospho-alpha-D-ribose 1-diphosphate: step 5/9. In terms of biological role, IGPS catalyzes the conversion of PRFAR and glutamine to IGP, AICAR and glutamate. The HisF subunit catalyzes the cyclization activity that produces IGP and AICAR from PRFAR using the ammonia provided by the HisH subunit. This chain is Imidazole glycerol phosphate synthase subunit HisF, found in Thiobacillus denitrificans (strain ATCC 25259 / T1).